The chain runs to 151 residues: Phosphopantetheine adenylyltransferase (151 aa).

Residue threonine 9 participates in substrate binding. Residues 9-10 (TF) and histidine 17 contribute to the ATP site. Lysine 41, threonine 73, and arginine 87 together coordinate substrate. Residues 88-90 (GIR), glutamate 98, and 122-128 (LTCVSST) each bind ATP.

This sequence belongs to the bacterial CoaD family. In terms of assembly, homohexamer. Requires Mg(2+) as cofactor.

The protein resides in the cytoplasm. It catalyses the reaction (R)-4'-phosphopantetheine + ATP + H(+) = 3'-dephospho-CoA + diphosphate. It participates in cofactor biosynthesis; coenzyme A biosynthesis; CoA from (R)-pantothenate: step 4/5. In terms of biological role, reversibly transfers an adenylyl group from ATP to 4'-phosphopantetheine, yielding dephospho-CoA (dPCoA) and pyrophosphate. This chain is Phosphopantetheine adenylyltransferase, found in Bacteroides thetaiotaomicron (strain ATCC 29148 / DSM 2079 / JCM 5827 / CCUG 10774 / NCTC 10582 / VPI-5482 / E50).